Reading from the N-terminus, the 523-residue chain is (R)-citramalate synthase (523 aa).

Residues 6-272 (VEVLDTTLRD…KGNESLKKLK (267 aa)) form the Pyruvate carboxyltransferase domain.

It belongs to the alpha-IPM synthase/homocitrate synthase family.

It catalyses the reaction pyruvate + acetyl-CoA + H2O = (3R)-citramalate + CoA + H(+). Its pathway is amino-acid biosynthesis; L-isoleucine biosynthesis; 2-oxobutanoate from pyruvate: step 1/3. Its activity is regulated as follows. Inhibited by isoleucine. Catalyzes the condensation of pyruvate and acetyl-coenzyme A to form (R)-citramalate. Makes part of a pathway for isoleucine biosynthesis, i.e. the citramalate-dependent pathway. Also displays a low alpha-isopropylmalate synthase activity, using 2-oxoisovalerate as substrate, but is unable to use 2-oxoglutarate. The chain is (R)-citramalate synthase from Sulfolobus acidocaldarius (strain ATCC 33909 / DSM 639 / JCM 8929 / NBRC 15157 / NCIMB 11770).